A 186-amino-acid polypeptide reads, in one-letter code: MTTAFDIADIKRRMAGAVTSLKQELGGLRTGRASASLLEPITVDAYGANMPLAQVATVSVPEPRLLSVQVWDRGMVNAVEKAIRDSNLGLNPNTEGQTLRIRIPELNEERRKELVKVAHKYAEAARVAVRHVRRDGMDLLKKLEKDSAISSDDMERLSKDVQKATDETISEVDQTLAHKEKEILSV.

Belongs to the RRF family.

It is found in the cytoplasm. Functionally, responsible for the release of ribosomes from messenger RNA at the termination of protein biosynthesis. May increase the efficiency of translation by recycling ribosomes from one round of translation to another. This Azorhizobium caulinodans (strain ATCC 43989 / DSM 5975 / JCM 20966 / LMG 6465 / NBRC 14845 / NCIMB 13405 / ORS 571) protein is Ribosome-recycling factor.